Reading from the N-terminus, the 101-residue chain is Urease subunit beta (101 aa).

It belongs to the urease beta subunit family. In terms of assembly, heterotrimer of UreA (gamma), UreB (beta) and UreC (alpha) subunits. Three heterotrimers associate to form the active enzyme.

Its subcellular location is the cytoplasm. The enzyme catalyses urea + 2 H2O + H(+) = hydrogencarbonate + 2 NH4(+). Its pathway is nitrogen metabolism; urea degradation; CO(2) and NH(3) from urea (urease route): step 1/1. This is Urease subunit beta from Paraburkholderia phytofirmans (strain DSM 17436 / LMG 22146 / PsJN) (Burkholderia phytofirmans).